The primary structure comprises 264 residues: Major prion protein (264 aa).

An N-terminal signal peptide occupies residues 1 to 24; that stretch reads MVKSHIGSWILVLFVAMWSDVGLC. An interaction with GRB2, ERI3 and SYN1 region spans residues 25 to 241; it reads KKRPKPGGGW…ESEAYYQRGA (217 aa). A disordered region spans residues 28–118; it reads PKPGGGWNTG…QWNKPSKPKT (91 aa). 6 consecutive repeat copies span residues 54–62, 63–70, 71–78, 79–86, 87–94, and 95–103. Positions 54-103 are 6 X 8 AA tandem repeats of P-H-G-G-G-W-G-Q; the sequence is SQGGGGWGQPHGGGWGQPHGGGWGQPHGGGWGQPHGGGWGQPHGGGGWGQ. A compositionally biased stretch (gly residues) spans 55-107; sequence QGGGGWGQPHGGGWGQPHGGGWGQPHGGGWGQPHGGGWGQPHGGGGWGQGGTH. Residues histidine 72, glycine 73, glycine 74, histidine 80, glycine 81, glycine 82, histidine 88, glycine 89, glycine 90, histidine 96, glycine 98, and glycine 99 each contribute to the Cu(2+) site. The cysteines at positions 190 and 225 are disulfide-linked. 2 N-linked (GlcNAc...) asparagine glycosylation sites follow: asparagine 192 and asparagine 208. Alanine 241 is lipidated: GPI-anchor amidated alanine. Residues 242 to 264 constitute a propeptide, removed in mature form; it reads SVILFSSPPVILLISFLIFLIVG.

This sequence belongs to the prion family. In terms of assembly, monomer and homodimer. Has a tendency to aggregate into amyloid fibrils containing a cross-beta spine, formed by a steric zipper of superposed beta-strands. Soluble oligomers may represent an intermediate stage on the path to fibril formation. Copper binding may promote oligomerization. Interacts with GRB2, APP, ERI3/PRNPIP and SYN1. Mislocalized cytosolically exposed PrP interacts with MGRN1; this interaction alters MGRN1 subcellular location and causes lysosomal enlargement. Interacts with KIAA1191.

The protein resides in the cell membrane. It is found in the golgi apparatus. In terms of biological role, its primary physiological function is unclear. Has cytoprotective activity against internal or environmental stresses. May play a role in neuronal development and synaptic plasticity. May be required for neuronal myelin sheath maintenance. May play a role in iron uptake and iron homeostasis. Soluble oligomers are toxic to cultured neuroblastoma cells and induce apoptosis (in vitro). Association with GPC1 (via its heparan sulfate chains) targets PRNP to lipid rafts. Also provides Cu(2+) or Zn(2+) for the ascorbate-mediated GPC1 deaminase degradation of its heparan sulfate side chains. The protein is Major prion protein (PRNP) of Tragelaphus imberbis (Lesser kudu).